A 279-amino-acid chain; its full sequence is Diaminopimelate epimerase 1 (279 aa).

Substrate contacts are provided by Asn13 and Asn66. Residue Cys75 is the Proton donor of the active site. Substrate is bound by residues 76–77 (GN), Asn164, Asn197, and 215–216 (ER). Residue Cys224 is the Proton acceptor of the active site. Position 225-226 (225-226 (GT)) interacts with substrate.

Belongs to the diaminopimelate epimerase family. Homodimer.

The protein resides in the cytoplasm. The catalysed reaction is (2S,6S)-2,6-diaminopimelate = meso-2,6-diaminopimelate. The protein operates within amino-acid biosynthesis; L-lysine biosynthesis via DAP pathway; DL-2,6-diaminopimelate from LL-2,6-diaminopimelate: step 1/1. Functionally, catalyzes the stereoinversion of LL-2,6-diaminopimelate (L,L-DAP) to meso-diaminopimelate (meso-DAP), a precursor of L-lysine and an essential component of the bacterial peptidoglycan. The chain is Diaminopimelate epimerase 1 from Nostoc sp. (strain PCC 7120 / SAG 25.82 / UTEX 2576).